We begin with the raw amino-acid sequence, 486 residues long: Hematopoietic lineage cell-specific protein (486 aa).

The segment at 27 to 66 (FVNDISEKEQRWGAKTIEGSGRTEHINIHQLRNKVSEEHD) is involved in HAX-1 binding. N6-acetyllysine is present on Lys41. 3 Cortactin repeats span residues 79–115 (ASHG…SQTD), 116–152 (AAKG…SQKD), and 153–189 (YSRG…SQRD). Position 123 is an N6-acetyllysine (Lys123). Tyr140 bears the Phosphotyrosine mark. One copy of the Cortactin 4; truncated repeat lies at 190-212 (YAKGFGGQYGIQKDRVDKSAVGF). An N6-acetyllysine modification is found at Lys192. Position 198 is a phosphotyrosine (Tyr198). Tyr222 is modified (phosphotyrosine; by FGR). At Lys241 the chain carries N6-acetyllysine. Over residues 243–276 (ESMAEEKRKREEEEKAQQVARRQQERKAVTKRSP) the composition is skewed to basic and acidic residues. The tract at residues 243–419 (ESMAEEKRKR…SALAGSSGCP (177 aa)) is disordered. Phosphoserine is present on Ser275. Thr308 is modified (phosphothreonine). A compositionally biased stretch (basic and acidic residues) spans 315 to 324 (EPVRTSREHP). 2 stretches are compositionally biased toward acidic residues: residues 353 to 383 (QVEE…DVEE) and 390 to 405 (EDEP…EPED). Phosphotyrosine; by SYK and FES is present on residues Tyr378 and Tyr397. Residues 406–419 (SSFSSALAGSSGCP) show a composition bias toward low complexity. The 59-residue stretch at 428 to 486 (ALGISAVAVYDYQGEGSDELSFDPDDVITDIEMVDEGWWRGRCHGHFGLFPANYVKLLE) folds into the SH3 domain.

In terms of assembly, associates with the SH2 and SH3 domains of LCK. Binding to he LCK SH3 domain occurs constitutively, while binding to the LCK SH2 domain occurs only upon TCR stimulation. A similar binding pattern was observed with LYN, but not with FYN in which the FYN SH2 region associates upon TCR stimulation but the FYN SH3 region does not associate regardless of TCR stimulation. Directly associates with HAX1, through binding to its C-terminal region. Interacts with HS1BP3. Interacts with FES/FPS. Interacts (via SH2 domain) with FGR. Forms a multiprotein complex with LYN and ANKRD54. In terms of processing, phosphorylated by FES. Phosphorylated by LYN, FYN and FGR after cross-linking of surface IgM on B-cells. Phosphorylation by LYN, FYN and FGR requires prior phosphorylation by SYK or FES. As to expression, expressed only in tissues and cells of hematopoietic origin.

It localises to the membrane. The protein localises to the cytoplasm. Its subcellular location is the mitochondrion. Substrate of the antigen receptor-coupled tyrosine kinase. Plays a role in antigen receptor signaling for both clonal expansion and deletion in lymphoid cells. May also be involved in the regulation of gene expression. This Homo sapiens (Human) protein is Hematopoietic lineage cell-specific protein (HCLS1).